The chain runs to 359 residues: Nicotinate-nucleotide--dimethylbenzimidazole phosphoribosyltransferase (359 aa).

Glutamate 318 (proton acceptor) is an active-site residue.

This sequence belongs to the CobT family. As to quaternary structure, homodimer.

The catalysed reaction is 5,6-dimethylbenzimidazole + nicotinate beta-D-ribonucleotide = alpha-ribazole 5'-phosphate + nicotinate + H(+). It functions in the pathway nucleoside biosynthesis; alpha-ribazole biosynthesis; alpha-ribazole from 5,6-dimethylbenzimidazole: step 1/2. Its function is as follows. Catalyzes the synthesis of alpha-ribazole-5'-phosphate from nicotinate mononucleotide (NAMN) and 5,6-dimethylbenzimidazole (DMB). In Escherichia coli O9:H4 (strain HS), this protein is Nicotinate-nucleotide--dimethylbenzimidazole phosphoribosyltransferase.